Here is a 674-residue protein sequence, read N- to C-terminus: Sodium/hydrogen exchanger 1 (674 aa).

A signal peptide spans 1-24 (MKLNKSYILIVVLLLSLFYSSVSS). A disordered region spans residues 31-65 (KSNNHYNSDNSNNDNKNININNNNDGDGDDDDDNN). Low complexity predominate over residues 37–55 (NSDNSNNDNKNININNNND). 12 helical membrane-spanning segments follow: residues 120 to 140 (TIIF…YFII), 144 to 164 (IPFV…GIVF), 175 to 195 (VVSF…IFET), 213 to 233 (MFAV…IYIV), 275 to 297 (LYIL…YSVV), 314 to 334 (VVAI…SLIL), 336 to 356 (WINI…FSYM), 359 to 379 (VLAG…GITL), 401 to 421 (TAAF…LTAH), 432 to 452 (WSIL…CFLL), 460 to 480 (IPWV…FAFS), and 499 to 519 (NTLL…YPLL). Positions 591–674 (HELDSNPLRF…NKNNDTLPLI (84 aa)) are disordered. Acidic residues predominate over residues 601–618 (DDDEEDDDDEDLDFDSDL). Positions 627–657 (DSIHQSDNNNNDNGNNNNNNNNIIINNNSQH) are enriched in low complexity. Polar residues predominate over residues 662–674 (GSNNKNNDTLPLI).

This sequence belongs to the monovalent cation:proton antiporter 1 (CPA1) transporter (TC 2.A.36) family.

It localises to the membrane. Its activity is regulated as follows. LY294002, an inhibitor of the catalytic subunit of PI3-kinase, blocks NHE1-dependent (but not NHE1-independent) increase in intracellular pH in response to cAMP. Functionally, regulation of intracellular pH homeostasis in response to cAMP, which is essential for chemotaxis. Necessary for F-actin localization and the kinetics of actin polymerization during chemotaxis and cell polarity but not for directional sensing. The polypeptide is Sodium/hydrogen exchanger 1 (nhe1) (Dictyostelium discoideum (Social amoeba)).